We begin with the raw amino-acid sequence, 408 residues long: Histidine--tRNA ligase (408 aa).

It belongs to the class-II aminoacyl-tRNA synthetase family. Homodimer.

Its subcellular location is the cytoplasm. The catalysed reaction is tRNA(His) + L-histidine + ATP = L-histidyl-tRNA(His) + AMP + diphosphate + H(+). In Campylobacter jejuni subsp. jejuni serotype O:6 (strain 81116 / NCTC 11828), this protein is Histidine--tRNA ligase.